Here is a 166-residue protein sequence, read N- to C-terminus: Holin-like protein TcdE (166 aa).

Helical transmembrane passes span isoleucine 15 to histidine 35, isoleucine 36 to alanine 56, methionine 77 to phenylalanine 97, and histidine 111 to leucine 131.

It belongs to the bacteriophage holin family. As to quaternary structure, homomultimer.

Its subcellular location is the cell membrane. Holin-like protein required for secretion of toxins A and B (TcdA and TcdB). Facilitates the release of toxins to the extracellular environment without causing the bacterial cell lysis. Its function is as follows. Has weak activity, suggesting that it may act as a antiholin when multiple forms are produced. The chain is Holin-like protein TcdE from Clostridioides difficile (Peptoclostridium difficile).